A 294-amino-acid chain; its full sequence is IVFRAAQKRSDIEIVGINDLLDAEYMAYMLKYDSTHGRFDGTVEVKDGHLVVNGKTIRVTAEKDPANLKWNEIGVDVVAEATGIFLTDETARKHITAGAKKVVLTGPSKDNTPMFVRGANFETYAGQDIVSNRSCTTNCLAPLAKVINDNFGIIEGLMTTVHATTATQKTVDGPSHKDWRGGRGAAQNIIPSSTGAAKAVGKVLPELNGKLTGMAFRVPTPNVSVVDLTVRLEKAASYEEIKKAIKAASEGPMKGVLGYTEDDVVSTDFNGEVCTSVFDAKAGIALNDNFVKLV.

Asp-19, Lys-63, and Thr-105 together coordinate NAD(+). D-glyceraldehyde 3-phosphate-binding positions include 134 to 136 (SCT), Thr-165, 194 to 195 (TG), and Arg-217. The active-site Nucleophile is Cys-135.

It belongs to the glyceraldehyde-3-phosphate dehydrogenase family. In terms of assembly, homotetramer.

The protein localises to the cytoplasm. It catalyses the reaction D-glyceraldehyde 3-phosphate + phosphate + NAD(+) = (2R)-3-phospho-glyceroyl phosphate + NADH + H(+). The protein operates within carbohydrate degradation; glycolysis; pyruvate from D-glyceraldehyde 3-phosphate: step 1/5. Catalyzes the oxidative phosphorylation of glyceraldehyde 3-phosphate (G3P) to 1,3-bisphosphoglycerate (BPG) using the cofactor NAD. The first reaction step involves the formation of a hemiacetal intermediate between G3P and a cysteine residue, and this hemiacetal intermediate is then oxidized to a thioester, with concomitant reduction of NAD to NADH. The reduced NADH is then exchanged with the second NAD, and the thioester is attacked by a nucleophilic inorganic phosphate to produce BPG. This is Glyceraldehyde-3-phosphate dehydrogenase (gap) from Klebsiella aerogenes (Enterobacter aerogenes).